The primary structure comprises 400 residues: Tyrosine--tRNA ligase (400 aa).

Residues 42–51 carry the 'HIGH' region motif; that stretch reads PTAPDLHLGH. The short motif at 226-230 is the 'KMSKS' region element; the sequence is KMSKS. K229 contacts ATP. The region spanning 339–399 is the S4 RNA-binding domain; that stretch reads FSISYILRRA…GKKKIAQIFV (61 aa).

It belongs to the class-I aminoacyl-tRNA synthetase family. TyrS type 2 subfamily. In terms of assembly, homodimer.

The protein resides in the cytoplasm. It catalyses the reaction tRNA(Tyr) + L-tyrosine + ATP = L-tyrosyl-tRNA(Tyr) + AMP + diphosphate + H(+). Its function is as follows. Catalyzes the attachment of tyrosine to tRNA(Tyr) in a two-step reaction: tyrosine is first activated by ATP to form Tyr-AMP and then transferred to the acceptor end of tRNA(Tyr). The sequence is that of Tyrosine--tRNA ligase from Hahella chejuensis (strain KCTC 2396).